The chain runs to 217 residues: 3-demethoxyubiquinol 3-hydroxylase (217 aa).

Positions 66, 96, 99, 148, 180, and 183 each coordinate Fe cation.

The protein belongs to the COQ7 family. The cofactor is Fe cation.

The protein resides in the cell membrane. The enzyme catalyses a 5-methoxy-2-methyl-3-(all-trans-polyprenyl)benzene-1,4-diol + AH2 + O2 = a 3-demethylubiquinol + A + H2O. It participates in cofactor biosynthesis; ubiquinone biosynthesis. Catalyzes the hydroxylation of 2-nonaprenyl-3-methyl-6-methoxy-1,4-benzoquinol during ubiquinone biosynthesis. In Ralstonia pickettii (strain 12J), this protein is 3-demethoxyubiquinol 3-hydroxylase.